A 314-amino-acid chain; its full sequence is NF-kappa-B inhibitor alpha (314 aa).

Residues Met1 to Glu40 form a disordered region. Over residues Gly15–Glu40 the composition is skewed to basic and acidic residues. Residue Lys21 forms a Glycyl lysine isopeptide (Lys-Gly) (interchain with G-Cter in SUMO); alternate linkage. Residue Lys21 forms a Glycyl lysine isopeptide (Lys-Gly) (interchain with G-Cter in ubiquitin); alternate linkage. A Glycyl lysine isopeptide (Lys-Gly) (interchain with G-Cter in ubiquitin) cross-link involves residue Lys22. The Destruction motif motif lies at His30–Ser36. Ser32 is modified (phosphoserine; by IKKB). Ser36 bears the Phosphoserine; by IKKA, IKKB, IKKE and TBK1 mark. Residue Tyr42 is modified to Phosphotyrosine. The Nuclear export signal motif lies at Met45 to Leu54. ANK repeat units lie at residues Asp73–Phe103, Leu110–Leu139, Arg143–Leu172, Asn182–Ala211, and Asn216–Arg245. The short motif at Leu110–Ile120 is the Nuclear import signal element. Residues Asn210 and Asn244 each carry the (3S)-3-hydroxyasparagine; by HIF1AN modification. Phosphoserine; by CK2 occurs at positions 283 and 288. Thr291 carries the phosphothreonine; by CK2 modification. Ser293 carries the phosphoserine; by CK2 modification. Thr296 is subject to Phosphothreonine.

This sequence belongs to the NF-kappa-B inhibitor family. Interacts with RELA; the interaction requires the nuclear import signal. Part of a 70-90 kDa complex at least consisting of CHUK, IKBKB, NFKBIA, RELA, ELP1 and MAP3K14. Interacts with NKIRAS1 and NKIRAS2. Interacts with RWDD3; the interaction enhances sumoylation. Interacts with PRMT2. Interacts with PRKACA in platelets; this interaction is disrupted by thrombin and collagen. Interacts with MEFV. Interacts with DDRGK1; positively regulates NFKBIA phosphorylation and degradation. Interacts with HNRNPA2B1; the interaction may be mediated by the RRM2 domain of HNRNPA2B1, and HNRNPA2B1 may interact simultaneously with FAM76B and either NFKBIA or NFKBIE to form a complex. In terms of processing, phosphorylated at Ser-32 and Ser-36 by IKKA/CHUK and IKKB/IKBKB; disables inhibition of NF-kappa-B DNA-binding activity. Phosphorylation at positions 32 and 36 is prerequisite to recognition by the SCF(FBXW11) and SCF(BTRC) complexes, leading to polyubiquitination and subsequent degradation. Post-translationally, polyubiquitinated at Lys-21 and/or Lys-22 following phosphorylation at Ser-32 and Ser-36. Monoubiquitinated at Lys-21 and/or Lys-22 by UBE2D3. Ubiquitin chain elongation is then performed by CDC34 in cooperation with the SCF(FBXW11) E3 ligase complex, building ubiquitin chains from the UBE2D3-primed NFKBIA-linked ubiquitin. The resulting polyubiquitination leads to protein degradation. Also ubiquitinated by the SCF(BTRC) complex following stimulus-dependent phosphorylation at Ser-32 and Ser-36. Deubiquitinated by USP38, leading to NF-kappa-B inhibition. Sumoylated; sumoylation requires the presence of the nuclear import signal. Sumoylation blocks ubiquitination and proteasome-mediated degradation of the protein thereby increasing the protein stability. In terms of processing, hydroxylated by HIF1AN. In terms of tissue distribution, highly expressed in lymph node, thymus followed by liver, brain, muscle, kidney, gastrointestinal and reproductive tract.

The protein localises to the cytoplasm. It is found in the nucleus. In terms of biological role, inhibits the activity of dimeric NF-kappa-B/REL complexes by trapping REL (RELA/p65 and NFKB1/p50) dimers in the cytoplasm by masking their nuclear localization signals. On cellular stimulation by immune and pro-inflammatory responses, becomes phosphorylated promoting ubiquitination and degradation, enabling the dimeric RELA to translocate to the nucleus and activate transcription. In Mus musculus (Mouse), this protein is NF-kappa-B inhibitor alpha (Nfkbia).